A 95-amino-acid chain; its full sequence is Co-chaperonin GroES (95 aa).

It belongs to the GroES chaperonin family. As to quaternary structure, heptamer of 7 subunits arranged in a ring. Interacts with the chaperonin GroEL.

The protein localises to the cytoplasm. Its function is as follows. Together with the chaperonin GroEL, plays an essential role in assisting protein folding. The GroEL-GroES system forms a nano-cage that allows encapsulation of the non-native substrate proteins and provides a physical environment optimized to promote and accelerate protein folding. GroES binds to the apical surface of the GroEL ring, thereby capping the opening of the GroEL channel. This chain is Co-chaperonin GroES, found in Xylella fastidiosa (strain M12).